A 128-amino-acid chain; its full sequence is uncharacterized protein (128 aa).

A VOC domain is found at 5–128 (SIHHIAIICS…DQLPLELYEQ (124 aa)). A divalent metal cation is bound by residues His-8, Glu-56, His-77, and Glu-124.

This is an uncharacterized protein from Bacillus subtilis (strain 168).